A 493-amino-acid chain; its full sequence is D-glyceraldehyde dehydrogenase (NADP(+)) (493 aa).

Positions 70 to 92 (RAKELIEKNRAELENIIMEENGK) form a coiled coil. NADP(+)-binding positions include 146–149 (TPWN), Arg-157, 172–176 (KPSSD), 204–210 (RGSEIGD), 225–248 (GSTATGQRIMQKASANMAKLILEL), Cys-281, and 381–383 (EIF). Substrate is bound by residues Asn-149 and Arg-157. Glu-247 serves as the catalytic Proton acceptor. Cys-281 provides a ligand contact to substrate. Catalysis depends on Cys-281, which acts as the Proton donor.

Belongs to the aldehyde dehydrogenase family. Glyceraldehyde dehydrogenase subfamily. As to quaternary structure, homotetramer. Dimer of dimers.

The catalysed reaction is D-glyceraldehyde + NADP(+) + H2O = (R)-glycerate + NADPH + 2 H(+). It functions in the pathway carbohydrate degradation; glycolysis. Its activity is regulated as follows. Inhibited by calcium, cadmium, copper and mercury ions. Stable for 2 hours at 60 degrees Celsius but activity is decreased to less than 50 percent within 20 minutes at 80 degrees Celsius. Two folds activity enhancement in the presence of 1 mM glutathione, DTT, or 2-mercaptoethanol. Complete activity inhibition by thiol-modifying reagents such as p-chloromercuribenzoic acid or p-hydroxy-mercuribenzoic acid. Its function is as follows. NADP-dependent dehydrogenase of the nED (non-phosphorylated Entner-Doudoroff) pathway with highest activity towards glyceraldehydes (e.g. D,L-glyceraldehyde and D-glyceraldehyde), to a lesser extent towards D,L-glyceraldehyde-3-phosphate and glycolaldehyde, but no activity towards aliphatic or aromatic aldehydes. This chain is D-glyceraldehyde dehydrogenase (NADP(+)), found in Thermoplasma acidophilum (strain ATCC 25905 / DSM 1728 / JCM 9062 / NBRC 15155 / AMRC-C165).